A 129-amino-acid chain; its full sequence is UPF0344 protein SAR0931 (129 aa).

4 helical membrane passes run 1-21 (MLHL…ATYL), 36-56 (LHMV…WILI), 67-87 (MLLT…EVSI), and 99-119 (MFWI…ILPL).

Belongs to the UPF0344 family.

It localises to the cell membrane. In Staphylococcus aureus (strain MRSA252), this protein is UPF0344 protein SAR0931.